The chain runs to 207 residues: Large ribosomal subunit protein bL9 (207 aa).

A compositionally biased stretch (basic and acidic residues) spans Gln162–Glu176. The disordered stretch occupies residues Gln162–Gln207.

The protein belongs to the bacterial ribosomal protein bL9 family.

Functionally, binds to the 23S rRNA. This Ehrlichia ruminantium (strain Gardel) protein is Large ribosomal subunit protein bL9.